The following is a 266-amino-acid chain: Amylovoran biosynthesis glycosyltransferase AmsE (266 aa).

It belongs to the glycosyltransferase 2 family.

It participates in glycan metabolism; exopolysaccharide biosynthesis. Its function is as follows. Involved in the biosynthesis of amylovoran which functions as a virulence factor. The chain is Amylovoran biosynthesis glycosyltransferase AmsE (amsE) from Erwinia amylovora (Fire blight bacteria).